Here is a 310-residue protein sequence, read N- to C-terminus: Ribosomal RNA small subunit methyltransferase H (310 aa).

S-adenosyl-L-methionine is bound by residues 32 to 34 (AGH), aspartate 51, phenylalanine 84, aspartate 102, and glutamine 109.

Belongs to the methyltransferase superfamily. RsmH family.

Its subcellular location is the cytoplasm. The enzyme catalyses cytidine(1402) in 16S rRNA + S-adenosyl-L-methionine = N(4)-methylcytidine(1402) in 16S rRNA + S-adenosyl-L-homocysteine + H(+). Specifically methylates the N4 position of cytidine in position 1402 (C1402) of 16S rRNA. This chain is Ribosomal RNA small subunit methyltransferase H, found in Campylobacter hominis (strain ATCC BAA-381 / DSM 21671 / CCUG 45161 / LMG 19568 / NCTC 13146 / CH001A).